Here is a 316-residue protein sequence, read N- to C-terminus: MTKSPLTLYLAAPRGFCAGVDRAIKIVEMAIEKWGAPVYVRHEIVHNKFVVDGLRAKGAVFVEELDECPDDRPVIFSAHGVPKAIPAEAERRQMVYVDATCPLVSKVHIEAERHAEHGLQIIMIGHRGHPETIGTMGQLPEGEVLLVETVADVARIAVRDPARLAFVTQTTLSVDDTRDIVAALQARFPQIVGPHKEDICYATTNRQEAVKAVAPKSDALLVVGAPNSSNSRRLVEVAAKAGCSYAQLVQRADDIDWRALDGIATIAVSAGASAPELLVNEVIDAFRARFDVTVEVVETAVEHVEFKVPRVLRQPA.

Residue Cys17 coordinates [4Fe-4S] cluster. His46 and His79 together coordinate (2E)-4-hydroxy-3-methylbut-2-enyl diphosphate. Positions 46 and 79 each coordinate dimethylallyl diphosphate. Positions 46 and 79 each coordinate isopentenyl diphosphate. Position 101 (Cys101) interacts with [4Fe-4S] cluster. His129 provides a ligand contact to (2E)-4-hydroxy-3-methylbut-2-enyl diphosphate. His129 serves as a coordination point for dimethylallyl diphosphate. Residue His129 participates in isopentenyl diphosphate binding. Residue Glu131 is the Proton donor of the active site. Thr170 serves as a coordination point for (2E)-4-hydroxy-3-methylbut-2-enyl diphosphate. Cys200 contacts [4Fe-4S] cluster. (2E)-4-hydroxy-3-methylbut-2-enyl diphosphate-binding residues include Ser228, Ser229, Asn230, and Ser273. Dimethylallyl diphosphate is bound by residues Ser228, Ser229, Asn230, and Ser273. Isopentenyl diphosphate is bound by residues Ser228, Ser229, Asn230, and Ser273.

It belongs to the IspH family. [4Fe-4S] cluster serves as cofactor.

It catalyses the reaction isopentenyl diphosphate + 2 oxidized [2Fe-2S]-[ferredoxin] + H2O = (2E)-4-hydroxy-3-methylbut-2-enyl diphosphate + 2 reduced [2Fe-2S]-[ferredoxin] + 2 H(+). It carries out the reaction dimethylallyl diphosphate + 2 oxidized [2Fe-2S]-[ferredoxin] + H2O = (2E)-4-hydroxy-3-methylbut-2-enyl diphosphate + 2 reduced [2Fe-2S]-[ferredoxin] + 2 H(+). Its pathway is isoprenoid biosynthesis; dimethylallyl diphosphate biosynthesis; dimethylallyl diphosphate from (2E)-4-hydroxy-3-methylbutenyl diphosphate: step 1/1. The protein operates within isoprenoid biosynthesis; isopentenyl diphosphate biosynthesis via DXP pathway; isopentenyl diphosphate from 1-deoxy-D-xylulose 5-phosphate: step 6/6. In terms of biological role, catalyzes the conversion of 1-hydroxy-2-methyl-2-(E)-butenyl 4-diphosphate (HMBPP) into a mixture of isopentenyl diphosphate (IPP) and dimethylallyl diphosphate (DMAPP). Acts in the terminal step of the DOXP/MEP pathway for isoprenoid precursor biosynthesis. This chain is 4-hydroxy-3-methylbut-2-enyl diphosphate reductase, found in Ruegeria pomeroyi (strain ATCC 700808 / DSM 15171 / DSS-3) (Silicibacter pomeroyi).